Here is a 477-residue protein sequence, read N- to C-terminus: PEP-dependent dihydroxyacetone kinase, phosphoryl donor subunit DhaM (477 aa).

The PTS EIIA type-4 domain occupies 1–135 (MIGLIIVSHS…QALQAKQQQL (135 aa)). His9 (tele-phosphohistidine intermediate) is an active-site residue. In terms of domain architecture, HPr spans 156-243 (ALTTQWVVKN…QLAQHNFGDN (88 aa)). The active-site Pros-phosphohistidine intermediate is His170. Residues 269-477 (HAPNTELCIS…IETRSLIVAS (209 aa)) are PTS EI-like, N-terminal part. The active-site Tele-phosphohistidine intermediate is His435.

This sequence belongs to the PEP-utilizing enzyme family. Homodimer. The dihydroxyacetone kinase complex is composed of a homodimer of DhaM, a homodimer of DhaK and the subunit DhaL.

The enzyme catalyses dihydroxyacetone + phosphoenolpyruvate = dihydroxyacetone phosphate + pyruvate. Its function is as follows. Component of the dihydroxyacetone kinase complex, which is responsible for the phosphoenolpyruvate (PEP)-dependent phosphorylation of dihydroxyacetone. DhaM serves as the phosphoryl donor. Is phosphorylated by phosphoenolpyruvate in an EI- and HPr-dependent reaction, and a phosphorelay system on histidine residues finally leads to phosphoryl transfer to DhaL and dihydroxyacetone. The chain is PEP-dependent dihydroxyacetone kinase, phosphoryl donor subunit DhaM from Providencia stuartii (strain MRSN 2154).